Here is a 467-residue protein sequence, read N- to C-terminus: RuvB-like helicase 2 (467 aa).

Residue 73 to 80 (GPPSTGKT) participates in ATP binding.

Belongs to the RuvB family. As to quaternary structure, may form heterododecamers with RVB1. Component of the SWR1 chromatin remodeling complex, the INO80 chromatin remodeling complex, and of the R2TP complex.

It is found in the nucleus. It catalyses the reaction ATP + H2O = ADP + phosphate + H(+). Its function is as follows. DNA helicase which participates in several chromatin remodeling complexes, including the SWR1 and the INO80 complexes. The SWR1 complex mediates the ATP-dependent exchange of histone H2A for the H2A variant HZT1 leading to transcriptional regulation of selected genes by chromatin remodeling. The INO80 complex remodels chromatin by shifting nucleosomes and is involved in DNA repair. Also involved in pre-rRNA processing. This Kluyveromyces lactis (strain ATCC 8585 / CBS 2359 / DSM 70799 / NBRC 1267 / NRRL Y-1140 / WM37) (Yeast) protein is RuvB-like helicase 2 (RVB2).